The chain runs to 126 residues: 14 kDa phosphohistidine phosphatase (126 aa).

Lysine 22 is a binding site for substrate. Histidine 54 acts as the Proton acceptor in catalysis. 95–97 is a substrate binding site; the sequence is SMG.

The protein belongs to the janus family. Monomer.

It is found in the cytoplasm. The enzyme catalyses N(pros)-phospho-L-histidyl-[protein] + H2O = L-histidyl-[protein] + phosphate. It carries out the reaction N(tele)-phospho-L-histidyl-[protein] + H2O = L-histidyl-[protein] + phosphate. In terms of biological role, exhibits phosphohistidine phosphatase activity. The polypeptide is 14 kDa phosphohistidine phosphatase (PHPT1) (Sus scrofa (Pig)).